We begin with the raw amino-acid sequence, 298 residues long: ATP synthase gamma chain (298 aa).

It belongs to the ATPase gamma chain family. F-type ATPases have 2 components, CF(1) - the catalytic core - and CF(0) - the membrane proton channel. CF(1) has five subunits: alpha(3), beta(3), gamma(1), delta(1), epsilon(1). CF(0) has three main subunits: a, b and c.

The protein localises to the cell inner membrane. Its function is as follows. Produces ATP from ADP in the presence of a proton gradient across the membrane. The gamma chain is believed to be important in regulating ATPase activity and the flow of protons through the CF(0) complex. The sequence is that of ATP synthase gamma chain from Francisella tularensis subsp. holarctica (strain FTNF002-00 / FTA).